The primary structure comprises 304 residues: Sulfate adenylyltransferase subunit 2 (304 aa).

Belongs to the PAPS reductase family. CysD subfamily. As to quaternary structure, heterodimer composed of CysD, the smaller subunit, and CysN.

It carries out the reaction sulfate + ATP + H(+) = adenosine 5'-phosphosulfate + diphosphate. It functions in the pathway sulfur metabolism; hydrogen sulfide biosynthesis; sulfite from sulfate: step 1/3. Its function is as follows. With CysN forms the ATP sulfurylase (ATPS) that catalyzes the adenylation of sulfate producing adenosine 5'-phosphosulfate (APS) and diphosphate, the first enzymatic step in sulfur assimilation pathway. APS synthesis involves the formation of a high-energy phosphoric-sulfuric acid anhydride bond driven by GTP hydrolysis by CysN coupled to ATP hydrolysis by CysD. This chain is Sulfate adenylyltransferase subunit 2, found in Halorhodospira halophila (strain DSM 244 / SL1) (Ectothiorhodospira halophila (strain DSM 244 / SL1)).